We begin with the raw amino-acid sequence, 578 residues long: Protein O-linked-mannose beta-1,4-N-acetylglucosaminyltransferase 2 (578 aa).

Residues 1-4 (MNLP) are Cytoplasmic-facing. Residues 5–25 (AVLNGLLVSVVAALLWKYVRL) traverse the membrane as a helical; Signal-anchor for type II membrane protein segment. Topologically, residues 26 to 578 (VEHTSQLEEE…PFADVLICKT (553 aa)) are lumenal. N98, N275, and N541 each carry an N-linked (GlcNAc...) asparagine glycan. The Fibronectin type-III domain occupies 482-578 (RVREPKCQTS…PFADVLICKT (97 aa)).

It belongs to the glycosyltransferase 61 family.

The protein localises to the endoplasmic reticulum membrane. It carries out the reaction 3-O-(alpha-D-mannosyl)-L-threonyl-[protein] + UDP-N-acetyl-alpha-D-glucosamine = 3-O-(N-acetyl-beta-D-glucosaminyl-(1-&gt;4)-alpha-D-mannosyl)-L-threonyl-[protein] + UDP + H(+). The protein operates within protein modification; protein glycosylation. Functionally, O-linked mannose beta-1,4-N-acetylglucosaminyltransferase that transfers UDP-N-acetyl-D-glucosamine to the 4-position of the mannose to generate N-acetyl-D-glucosamine-beta-1,4-O-D-mannosylprotein. Involved in the biosynthesis of the phosphorylated O-mannosyl trisaccharide (N-acetylgalactosamine-beta-3-N-acetylglucosamine-beta-4-(phosphate-6-)mannose), a carbohydrate structure present in alpha-dystroglycan (DAG1), which is required for binding laminin G-like domain-containing extracellular proteins with high affinity. The protein is Protein O-linked-mannose beta-1,4-N-acetylglucosaminyltransferase 2 (pomgnt2) of Danio rerio (Zebrafish).